The following is a 470-amino-acid chain: Glucose-1-phosphate adenylyltransferase (470 aa).

Residues Gly-165, 182 to 183, and Ser-200 contribute to the alpha-D-glucose 1-phosphate site; that span reads EK.

This sequence belongs to the bacterial/plant glucose-1-phosphate adenylyltransferase family. Homotetramer.

It catalyses the reaction alpha-D-glucose 1-phosphate + ATP + H(+) = ADP-alpha-D-glucose + diphosphate. It functions in the pathway glycan biosynthesis; glycogen biosynthesis. Its function is as follows. Involved in the biosynthesis of ADP-glucose, a building block required for the elongation reactions to produce glycogen. Catalyzes the reaction between ATP and alpha-D-glucose 1-phosphate (G1P) to produce pyrophosphate and ADP-Glc. This chain is Glucose-1-phosphate adenylyltransferase, found in Paenarthrobacter aurescens (strain TC1).